A 459-amino-acid chain; its full sequence is Argininosuccinate lyase (459 aa).

The protein belongs to the lyase 1 family. Argininosuccinate lyase subfamily.

It localises to the cytoplasm. It carries out the reaction 2-(N(omega)-L-arginino)succinate = fumarate + L-arginine. Its pathway is amino-acid biosynthesis; L-arginine biosynthesis; L-arginine from L-ornithine and carbamoyl phosphate: step 3/3. The protein is Argininosuccinate lyase of Ruminiclostridium cellulolyticum (strain ATCC 35319 / DSM 5812 / JCM 6584 / H10) (Clostridium cellulolyticum).